The following is a 361-amino-acid chain: UDP-3-O-acylglucosamine N-acyltransferase (361 aa).

Histidine 253 functions as the Proton acceptor in the catalytic mechanism.

The protein belongs to the transferase hexapeptide repeat family. LpxD subfamily. As to quaternary structure, homotrimer.

It carries out the reaction a UDP-3-O-[(3R)-3-hydroxyacyl]-alpha-D-glucosamine + a (3R)-hydroxyacyl-[ACP] = a UDP-2-N,3-O-bis[(3R)-3-hydroxyacyl]-alpha-D-glucosamine + holo-[ACP] + H(+). The protein operates within bacterial outer membrane biogenesis; LPS lipid A biosynthesis. Functionally, catalyzes the N-acylation of UDP-3-O-acylglucosamine using 3-hydroxyacyl-ACP as the acyl donor. Is involved in the biosynthesis of lipid A, a phosphorylated glycolipid that anchors the lipopolysaccharide to the outer membrane of the cell. This chain is UDP-3-O-acylglucosamine N-acyltransferase, found in Burkholderia pseudomallei (strain 668).